The sequence spans 124 residues: Large ribosomal subunit protein bL12 (124 aa).

It belongs to the bacterial ribosomal protein bL12 family. In terms of assembly, homodimer. Part of the ribosomal stalk of the 50S ribosomal subunit. Forms a multimeric L10(L12)X complex, where L10 forms an elongated spine to which 2 to 4 L12 dimers bind in a sequential fashion. Binds GTP-bound translation factors.

Forms part of the ribosomal stalk which helps the ribosome interact with GTP-bound translation factors. Is thus essential for accurate translation. This Borreliella afzelii (strain PKo) (Borrelia afzelii) protein is Large ribosomal subunit protein bL12.